We begin with the raw amino-acid sequence, 331 residues long: Aspartate carbamoyltransferase catalytic subunit (331 aa).

Residues Arg66 and Thr67 each coordinate carbamoyl phosphate. Lys94 lines the L-aspartate pocket. Residues Arg116, His149, and Gln152 each coordinate carbamoyl phosphate. L-aspartate is bound by residues Arg189 and Arg243. Residues Gly284 and Pro285 each contribute to the carbamoyl phosphate site.

The protein belongs to the aspartate/ornithine carbamoyltransferase superfamily. ATCase family. As to quaternary structure, heterododecamer (2C3:3R2) of six catalytic PyrB chains organized as two trimers (C3), and six regulatory PyrI chains organized as three dimers (R2).

It carries out the reaction carbamoyl phosphate + L-aspartate = N-carbamoyl-L-aspartate + phosphate + H(+). It functions in the pathway pyrimidine metabolism; UMP biosynthesis via de novo pathway; (S)-dihydroorotate from bicarbonate: step 2/3. Catalyzes the condensation of carbamoyl phosphate and aspartate to form carbamoyl aspartate and inorganic phosphate, the committed step in the de novo pyrimidine nucleotide biosynthesis pathway. The sequence is that of Aspartate carbamoyltransferase catalytic subunit from Thermosynechococcus vestitus (strain NIES-2133 / IAM M-273 / BP-1).